Consider the following 362-residue polypeptide: Peptide chain release factor 1 (362 aa).

Gln238 carries the N5-methylglutamine modification.

The protein belongs to the prokaryotic/mitochondrial release factor family. In terms of processing, methylated by PrmC. Methylation increases the termination efficiency of RF1.

The protein resides in the cytoplasm. Its function is as follows. Peptide chain release factor 1 directs the termination of translation in response to the peptide chain termination codons UAG and UAA. This chain is Peptide chain release factor 1, found in Psychrobacter arcticus (strain DSM 17307 / VKM B-2377 / 273-4).